The following is a 629-amino-acid chain: Phosphomethylpyrimidine synthase (629 aa).

The tract at residues 1 to 24 (MSTKPKNAAHLSESAQVDSGSVQP) is disordered. Over residues 13–24 (ESAQVDSGSVQP) the composition is skewed to polar residues. Substrate is bound by residues Asn-233, Met-262, Tyr-291, His-327, 347 to 349 (SRG), 388 to 391 (DGLR), and Glu-427. Position 431 (His-431) interacts with Zn(2+). Tyr-454 contacts substrate. A Zn(2+)-binding site is contributed by His-495. [4Fe-4S] cluster-binding residues include Cys-575, Cys-578, and Cys-583.

The protein belongs to the ThiC family. In terms of assembly, homodimer. The cofactor is [4Fe-4S] cluster.

It carries out the reaction 5-amino-1-(5-phospho-beta-D-ribosyl)imidazole + S-adenosyl-L-methionine = 4-amino-2-methyl-5-(phosphooxymethyl)pyrimidine + CO + 5'-deoxyadenosine + formate + L-methionine + 3 H(+). It participates in cofactor biosynthesis; thiamine diphosphate biosynthesis. Catalyzes the synthesis of the hydroxymethylpyrimidine phosphate (HMP-P) moiety of thiamine from aminoimidazole ribotide (AIR) in a radical S-adenosyl-L-methionine (SAM)-dependent reaction. The chain is Phosphomethylpyrimidine synthase from Pseudomonas syringae pv. tomato (strain ATCC BAA-871 / DC3000).